The following is a 335-amino-acid chain: Holliday junction branch migration complex subunit RuvB (335 aa).

Residues 4-184 (ADRIISGQAK…FGIVQRLEFY (181 aa)) form a large ATPase domain (RuvB-L) region. Residues I23, R24, G65, K68, T69, T70, 131-133 (EDY), R174, Y184, and R221 each bind ATP. Position 69 (T69) interacts with Mg(2+). The interval 185–255 (SVEDLTSIVA…VAKQALSMLD (71 aa)) is small ATPAse domain (RuvB-S). The tract at residues 258–335 (DAGFDYLDRK…RHFGLQKLSD (78 aa)) is head domain (RuvB-H). Residues R294, R313, and R318 each coordinate DNA.

This sequence belongs to the RuvB family. Homohexamer. Forms an RuvA(8)-RuvB(12)-Holliday junction (HJ) complex. HJ DNA is sandwiched between 2 RuvA tetramers; dsDNA enters through RuvA and exits via RuvB. An RuvB hexamer assembles on each DNA strand where it exits the tetramer. Each RuvB hexamer is contacted by two RuvA subunits (via domain III) on 2 adjacent RuvB subunits; this complex drives branch migration. In the full resolvosome a probable DNA-RuvA(4)-RuvB(12)-RuvC(2) complex forms which resolves the HJ.

It is found in the cytoplasm. The catalysed reaction is ATP + H2O = ADP + phosphate + H(+). Functionally, the RuvA-RuvB-RuvC complex processes Holliday junction (HJ) DNA during genetic recombination and DNA repair, while the RuvA-RuvB complex plays an important role in the rescue of blocked DNA replication forks via replication fork reversal (RFR). RuvA specifically binds to HJ cruciform DNA, conferring on it an open structure. The RuvB hexamer acts as an ATP-dependent pump, pulling dsDNA into and through the RuvAB complex. RuvB forms 2 homohexamers on either side of HJ DNA bound by 1 or 2 RuvA tetramers; 4 subunits per hexamer contact DNA at a time. Coordinated motions by a converter formed by DNA-disengaged RuvB subunits stimulates ATP hydrolysis and nucleotide exchange. Immobilization of the converter enables RuvB to convert the ATP-contained energy into a lever motion, pulling 2 nucleotides of DNA out of the RuvA tetramer per ATP hydrolyzed, thus driving DNA branch migration. The RuvB motors rotate together with the DNA substrate, which together with the progressing nucleotide cycle form the mechanistic basis for DNA recombination by continuous HJ branch migration. Branch migration allows RuvC to scan DNA until it finds its consensus sequence, where it cleaves and resolves cruciform DNA. This chain is Holliday junction branch migration complex subunit RuvB, found in Haemophilus influenzae (strain 86-028NP).